The primary structure comprises 462 residues: MSEEQPHANLAVPAFKTEKEPITQTRNGQSSVWRFGGSDKAAKASTVTLRGVIYMLFDNCGKDVNKTILPLGHGDPSVYPCFRTCIEAEDAVVDVLRSGKGNSYGPGAGILPARRAVADYMNRDLPHKLTPEDIFLTAGCNQGIEIVFESLARPNANILLPRPGFPHYDARAAYSGLEVRKFDLLPEKEWEIDLEGIEAIADENTVAMVVINPNNPCGNVYSHDHLKKVAETARKLGIMVISDEVYDRTIFGDNPFVSMGKFASIVPVLTLAGISKGWVVPGWKIGWIALNDPEGVFETTKVLQSIKQNLDVTPDPATIIQAALPAILEKADKNFFAKKNKILKHNVDLVCDRLKDIPCVVCPKKPESCTYLLTKLELSLMDNIKDDIDFCVKLAREENLVFLPGDALGLKNWMRITIGVEAHMLEDALERLKGFCTRHAKKTETETESLQALKLSDNNLEM.

Belongs to the class-I pyridoxal-phosphate-dependent aminotransferase family. It depends on pyridoxal 5'-phosphate as a cofactor.

C-S lyase involved in glucosinolate biosynthesis. Converts S-(alkylacetohydroximoyl)-L-cysteine to thiohydroximate. Functions in auxin homeostasis. Probably required for glucosinolate activation in response to pathogens. The polypeptide is S-alkyl-thiohydroximate lyase SUR1 (SUR1) (Arabidopsis thaliana (Mouse-ear cress)).